A 245-amino-acid polypeptide reads, in one-letter code: Thiopurine S-methyltransferase (245 aa).

Phosphoserine is present on serine 14. 29 to 40 (WQDKWVNGKTAF) provides a ligand contact to S-adenosyl-L-methionine. Substrate is bound at residue phenylalanine 40. An N6-acetyllysine modification is found at lysine 58. S-adenosyl-L-methionine-binding positions include leucine 69, glutamate 90, 134–135 (SI), and arginine 152.

The protein belongs to the class I-like SAM-binding methyltransferase superfamily. TPMT family. In terms of assembly, monomer.

The protein resides in the cytoplasm. It catalyses the reaction S-adenosyl-L-methionine + a thiopurine = S-adenosyl-L-homocysteine + a thiopurine S-methylether.. The catalysed reaction is mercaptopurine + S-adenosyl-L-methionine = 6-methylthiopurine + S-adenosyl-L-homocysteine + H(+). It carries out the reaction 6-thioguanine + S-adenosyl-L-methionine = 6-methylthioguanine + S-adenosyl-L-homocysteine + H(+). With respect to regulation, inhibited by S-adenosyl-L-homocysteine (SAH). Catalyzes the S-methylation of thiopurine drugs such as 6-mercaptopurine (also called mercaptopurine, 6-MP or its brand name Purinethol) and 6-thioguanine (also called tioguanine or 6-TG) using S-adenosyl-L-methionine as the methyl donor. TPMT activity modulates the cytotoxic effects of thiopurine prodrugs. A natural substrate for this enzyme has yet to be identified. The polypeptide is Thiopurine S-methyltransferase (TPMT) (Homo sapiens (Human)).